The primary structure comprises 201 residues: Dephospho-CoA kinase (201 aa).

The DPCK domain maps to Leu10–Arg201. Ala18 to Thr23 lines the ATP pocket.

This sequence belongs to the CoaE family.

Its subcellular location is the cytoplasm. It catalyses the reaction 3'-dephospho-CoA + ATP = ADP + CoA + H(+). It participates in cofactor biosynthesis; coenzyme A biosynthesis; CoA from (R)-pantothenate: step 5/5. Functionally, catalyzes the phosphorylation of the 3'-hydroxyl group of dephosphocoenzyme A to form coenzyme A. The sequence is that of Dephospho-CoA kinase from Synechocystis sp. (strain ATCC 27184 / PCC 6803 / Kazusa).